A 336-amino-acid chain; its full sequence is Succinylglutamate desuccinylase (336 aa).

3 residues coordinate Zn(2+): H59, E62, and H151. E215 is a catalytic residue.

Belongs to the AspA/AstE family. Succinylglutamate desuccinylase subfamily. Zn(2+) is required as a cofactor.

The catalysed reaction is N-succinyl-L-glutamate + H2O = L-glutamate + succinate. It participates in amino-acid degradation; L-arginine degradation via AST pathway; L-glutamate and succinate from L-arginine: step 5/5. Functionally, transforms N(2)-succinylglutamate into succinate and glutamate. The protein is Succinylglutamate desuccinylase of Pseudomonas fluorescens (strain Pf0-1).